A 138-amino-acid chain; its full sequence is Odorant-binding protein 22 (138 aa).

The signal sequence occupies residues 1 to 16 (MKVFIAVFALIAVAAA). Arginine 30 contributes to the (5Z,8Z,11Z,14Z)-eicosatetraenoate binding site. 2 residues coordinate (9Z)-hexadecenoate: arginine 30 and tyrosine 61. Residues arginine 30 and tyrosine 61 each coordinate (9Z,12Z)-octadecadienoate. 3 disulfides stabilise this stretch: cysteine 33-cysteine 64, cysteine 60-cysteine 113, and cysteine 103-cysteine 122. Asparagine 127 is a glycosylation site (N-linked (GlcNAc...) asparagine).

Belongs to the PBP/GOBP family. In terms of assembly, monomer in solution. In terms of tissue distribution, high-level expression in female mouth parts, particularly in the proboscis (at protein level). Moderate-level expression in female antenna (at protein level). Expressed in testis but not in the accessory gland or ejaculatory duct (at protein level). Expressed in spermathecae (at protein level). Female salivary gland. Female chemosensory organs: antenna, palp and proboscis. Not detected in midgut.

Its subcellular location is the secreted. In terms of biological role, involved in modulation of blood-feeding behavior and capacity in female mosquitoes. Required for normal oviposition. Required for normal fecundity and fertility of female and male mosquitoes. Required for normal expression of VGA1 gene, which encodes the egg yolk protein vitellogenin-A1. Involved in regulation of spermatozoa development. Required for normal female longevity when mosquitoes are maintained on regular sugar meal. Binds long chain fatty acids. Functionally, (Microbial infection) Facilitates shedding of dengue virus type 2 particles into mosquito saliva. Does not affect dengue virus type 2 replication or infection prevalence in midgut and salivary glands at 14 days after blood feeding. (Microbial infection) Facilitates shedding of Zika virus particles into mosquito saliva. Does not affect Zika virus replication or infection prevalence in midgut and salivary glands at 14 days after blood feeding. In Aedes aegypti (Yellowfever mosquito), this protein is Odorant-binding protein 22.